We begin with the raw amino-acid sequence, 713 residues long: MRPVSKIERTVAPFEVVSPYQPSGDQPAAIAELDRRIRAGEKDVVLLGATGTGKSATTAWMIEKLQRPTLVMAPNKTLAAQLANEFRELLPNNAVEYFVSYYDYYQPEAYVPQSDTYIEKDSSINEEVERLRHSATNSLLTRRDVVVVASVSCIYGLGTPQEYVDRMVPLRVGDEVDRDDLLRRFVDIQYTRNDLAFTRGTFRVRGDTIEIFPVYEELAVRIEMFGDEIEALSTLHPLTGEIISDDQHLYVFPASHYVAGPERLERAANDIEKELGERLTELEKQGKLLEAQRLRMRTTYDLEMLRQIGSCSGVENYSMHFDGREPGSPPNTLLDYFPDDFLLVIDESHVTVPQIGAMYEGDASRKRTLVDHGFRLPSALDNRPLKWEEFQERIGQAVYLSATPGKYELSRGDGFVEQIIRPTGLIDPEVVVKPTEGQIDDLVHEIRKRTEKDERVLVTTLTKKMAEDLTDYFLELGIQVRYLHSDVDTLRRVELLRELRAGEYDVLVGINLLREGLDLPEVSLVAILDADKEGFLRSGTSLIQTIGRAARNVSGQVHMYADKITPAMEKAIDETNRRREKQVAYNKEKGIDPQPLRKKINDIVAQIAREDIDTEQLLGSGYRQAKDGKGAKAPVPSLGGKAAAKGAKSAKGKAKETVPTDRPAAKLAEEIEELTNRMRAAAADLQFEIAARLRDEVSEMKKELRQMKEAGLA.

A Helicase ATP-binding domain is found at 35-421 (RRIRAGEKDV…GDGFVEQIIR (387 aa)). ATP is bound at residue 48-55 (GATGTGKS). A Beta-hairpin motif is present at residues 101–124 (YYDYYQPEAYVPQSDTYIEKDSSI). Residues 438 to 604 (QIDDLVHEIR…PLRKKINDIV (167 aa)) enclose the Helicase C-terminal domain. The disordered stretch occupies residues 624–663 (QAKDGKGAKAPVPSLGGKAAAKGAKSAKGKAKETVPTDRP). The span at 639 to 649 (GGKAAAKGAKS) shows a compositional bias: low complexity. Basic and acidic residues predominate over residues 653-663 (KAKETVPTDRP). In terms of domain architecture, UVR spans 668 to 703 (AEEIEELTNRMRAAAADLQFEIAARLRDEVSEMKKE).

This sequence belongs to the UvrB family. As to quaternary structure, forms a heterotetramer with UvrA during the search for lesions. Interacts with UvrC in an incision complex.

The protein resides in the cytoplasm. Functionally, the UvrABC repair system catalyzes the recognition and processing of DNA lesions. A damage recognition complex composed of 2 UvrA and 2 UvrB subunits scans DNA for abnormalities. Upon binding of the UvrA(2)B(2) complex to a putative damaged site, the DNA wraps around one UvrB monomer. DNA wrap is dependent on ATP binding by UvrB and probably causes local melting of the DNA helix, facilitating insertion of UvrB beta-hairpin between the DNA strands. Then UvrB probes one DNA strand for the presence of a lesion. If a lesion is found the UvrA subunits dissociate and the UvrB-DNA preincision complex is formed. This complex is subsequently bound by UvrC and the second UvrB is released. If no lesion is found, the DNA wraps around the other UvrB subunit that will check the other stand for damage. The polypeptide is UvrABC system protein B (Streptomyces avermitilis (strain ATCC 31267 / DSM 46492 / JCM 5070 / NBRC 14893 / NCIMB 12804 / NRRL 8165 / MA-4680)).